The chain runs to 279 residues: Oxygen-dependent coproporphyrinogen-III oxidase (279 aa).

S102 is a substrate binding site. H106 and H116 together coordinate a divalent metal cation. Residue H116 is the Proton donor of the active site. 118–120 contacts substrate; sequence NTR. A divalent metal cation-binding residues include H149 and H179. Residues 244-279 are important for dimerization; that stretch reads YVEFNLLYDRGTKFGLMTDGNVEAILMSLPPVVKFN.

It belongs to the aerobic coproporphyrinogen-III oxidase family. As to quaternary structure, homodimer. It depends on a divalent metal cation as a cofactor.

The protein resides in the cytoplasm. The catalysed reaction is coproporphyrinogen III + O2 + 2 H(+) = protoporphyrinogen IX + 2 CO2 + 2 H2O. Its pathway is porphyrin-containing compound metabolism; protoporphyrin-IX biosynthesis; protoporphyrinogen-IX from coproporphyrinogen-III (O2 route): step 1/1. Its function is as follows. Involved in the heme biosynthesis. Catalyzes the aerobic oxidative decarboxylation of propionate groups of rings A and B of coproporphyrinogen-III to yield the vinyl groups in protoporphyrinogen-IX. The protein is Oxygen-dependent coproporphyrinogen-III oxidase of Rickettsia prowazekii (strain Madrid E).